Reading from the N-terminus, the 368-residue chain is MDNLKKTPLFELYKKYNGKIIDFAGWALPVQFESIISEHEAVRNAAGLFDVSHMGEITVKGREAFNFLQNLITNDLSKLKGNQVLYTFMCNYNGGVVDDLLVYKYSDEHFYLVVNAANIEKDYKWMKDNKGVYEVEIENISDEVAELAIQGPKAEEILQKLTDTDLSEIKFFCFKDNVKIAGIECLVSRTGYTGEDGFEIYMPNKYAVELWEKIVEVGKEYGLKPAGLGARDTLRFEAGLPLYGNELSEEITPLEAGFEFFVKFDKGNFIGKDALLKQKEEGLKRKIVGFEMIDNGIPRHGYEVRAHNQKIGYVTTGYFSPTLKKNIGLALIDSKYAQLGNQIEIVIRNKPLKALIISKNFYKKNYKK.

It belongs to the GcvT family. As to quaternary structure, the glycine cleavage system is composed of four proteins: P, T, L and H.

The enzyme catalyses N(6)-[(R)-S(8)-aminomethyldihydrolipoyl]-L-lysyl-[protein] + (6S)-5,6,7,8-tetrahydrofolate = N(6)-[(R)-dihydrolipoyl]-L-lysyl-[protein] + (6R)-5,10-methylene-5,6,7,8-tetrahydrofolate + NH4(+). Its function is as follows. The glycine cleavage system catalyzes the degradation of glycine. The chain is Aminomethyltransferase from Thermoanaerobacter sp. (strain X514).